The sequence spans 375 residues: Actin, cytoplasmic (375 aa).

This sequence belongs to the actin family.

It localises to the cytoplasm. It is found in the cytoskeleton. It carries out the reaction ATP + H2O = ADP + phosphate + H(+). Functionally, actins are highly conserved proteins that are involved in various types of cell motility and are ubiquitously expressed in all eukaryotic cells. This Sterkiella nova (Ciliate) protein is Actin, cytoplasmic (MIC-ACT-1).